A 757-amino-acid chain; its full sequence is MDVNPTLLFLKEPAQNAISTTFPYTGDPPYSHGTGTGYTMDTVNRTHQYSEKGKWTTNTETGAPQLNPIDGPLPEDNEPSGYAQQDCVLEAMAFLEESHPGIFENSCLETMEVVQQTRVDRLTQGRKTYDWTLNRNQPAATALANTIEVFRSNGLTANESGRLIDFLKDVMESMDKEEMEITTHFQRKRRVRDNMTKKMVTQRTIGKKKQRVNKRSYLIRALTLNTMTKDAERGKLKRRAIATPGMQIRGFVYFVETLARSICEKLEQSGLPVGGNEKKAKLANVVRKMMTNSQDTELSFTITGDNTKWNENQNPRMFLAMITYITKNQPEWFRNILSIAPIMFSNKMARLGKGYMFESKRMKLRTQIPAEMLASIDLKYFNESTRKKIEKIRPLLIDGTASLSPGMMMGMFNMLSTVLGVSILNLGQKKYTKTTYWWDGLQSSDDFALIVNAPNHEGIQAGVDRFYRTCKLVGINMSKKKSYINRTGTFEFTSFFYRYGFVANFSMELPSFGVSGINESADMSIGVTVIKNNMINNDLGPATAQMALQLFIKDYRYTYRCHRGHTQIQTRRSFELKKLWEQTRSKAGLFVSDGGPNLYNIRNLHIPEVCLKWELMDEDYQGRLCNPLNPFVSHKEIESVNNAVVMPAHGPAKSMEYDAVATTHSWIPKRNRSILNTSQRGILEDEQMYQKCCNLFEKFFPSSSYRRPVGISSMVEAMVSRARIDARIDFESGRIKKEEFSEIMKICSTIEELRRQK.

Residues 50 to 81 (SEKGKWTTNTETGAPQLNPIDGPLPEDNEPSG) are disordered. Residues 55-64 (WTTNTETGAP) show a composition bias toward polar residues. 2 short sequence motifs (nuclear localization signal) span residues 187-195 (RKRRVRDNM) and 203-216 (RTIG…NKRS). Residues 249 to 256 (RGFVYFVE) form a promoter-binding site region. Residues 286–483 (VRKMMTNSQD…GINMSKKKSY (198 aa)) enclose the RdRp catalytic domain.

This sequence belongs to the influenza viruses polymerase PB1 family. As to quaternary structure, influenza RNA polymerase is composed of three subunits: PB1, PB2 and PA. Interacts (via N-terminus) with PA (via C-terminus). Interacts (via C-terminus) with PB2 (via N-terminus); this interaction is essential for transcription initiation. In terms of processing, phosphorylated by host PRKCA.

Its subcellular location is the host nucleus. The protein localises to the host cytoplasm. The enzyme catalyses RNA(n) + a ribonucleoside 5'-triphosphate = RNA(n+1) + diphosphate. Its function is as follows. RNA-dependent RNA polymerase which is responsible for replication and transcription of virus RNA segments. The transcription of viral mRNAs occurs by a unique mechanism called cap-snatching. 5' methylated caps of cellular mRNAs are cleaved after 10-13 nucleotides by PA. In turn, these short capped RNAs are used as primers by PB1 for transcription of viral mRNAs. During virus replication, PB1 initiates RNA synthesis and copy vRNA into complementary RNA (cRNA) which in turn serves as a template for the production of more vRNAs. The protein is RNA-directed RNA polymerase catalytic subunit of Influenza A virus (strain A/Swine/Colorado/1/1977 H3N2).